The sequence spans 1960 residues: Zinc finger protein 638 (1960 aa).

The disordered stretch occupies residues 1–137 (MSRPRFNPRG…SPKVQSRYTK (137 aa)). The span at 19 to 31 (APNPPGMRPPGPF) shows a compositional bias: pro residues. 3 positions are modified to asymmetric dimethylarginine: Arg47, Arg49, and Arg54. Residues 60-75 (SYQNMGPQRMNVQVTQ) are compositionally biased toward polar residues. The segment covering 76 to 89 (HRTDPRLTKEKLDF) has biased composition (basic and acidic residues). Over residues 117–137 (KQSSVTQVTEQSPKVQSRYTK) the composition is skewed to polar residues. Residues Ser128 and Ser288 each carry the phosphoserine modification. Lys291 is covalently cross-linked (Glycyl lysine isopeptide (Lys-Gly) (interchain with G-Cter in SUMO2)). A phosphoserine mark is found at Ser298, Ser367, Ser381, and Ser418. The disordered stretch occupies residues 352–373 (KSVISSADAHGGPTESKKDYQS). Disordered regions lie at residues 463–673 (NPEI…QSLS), 749–804 (PGKK…STVK), and 827–899 (KASI…KESE). A compositionally biased stretch (basic and acidic residues) spans 468 to 483 (PSRRNESNRKENETPR). Residues 470–573 (RRNESNRKEN…ERTSRKSVRS (104 aa)) form an involved in localization to nuclear speckles region. Residues 484–556 (RRSHSPSPRH…SRNLLRRSPK (73 aa)) are compositionally biased toward basic residues. Ser554 is modified (phosphoserine). Basic and acidic residues-rich tracts occupy residues 565-583 (RTSR…EDGG) and 591-602 (EVTKQKHTETVD). Phosphoserine is present on residues Ser606 and Ser615. Residues 618 to 628 (KPSAKSLSSVK) are compositionally biased toward low complexity. Ser637 is modified (phosphoserine). The RRM 1 domain maps to 676–751 (SILLVSELPE…KSVKVCVPGK (76 aa)). A compositionally biased stretch (basic and acidic residues) spans 755-782 (QNKEMKKKPSDIKKSSASALKKETDASK). Lys775 is covalently cross-linked (Glycyl lysine isopeptide (Lys-Gly) (interchain with G-Cter in SUMO2)). The segment covering 783–802 (TMETVSSSSSAKSGQIKSST) has biased composition (low complexity). Composition is skewed to basic and acidic residues over residues 838 to 854 (KSLE…KDSN), 867 to 879 (ASSE…KSAE), and 888 to 899 (ATEKEPVNKESE). The RRM 2 domain maps to 902 to 976 (SVVFISNLPN…NQLSISMAPE (75 aa)). Basic and acidic residues predominate over residues 1082–1092 (SEVQRKNDLEL). Disordered regions lie at residues 1082–1151 (SEVQ…EEPK), 1396–1420 (TVVS…PKPV), 1442–1462 (TRSG…GVNR), 1484–1527 (TKQS…KSKE), and 1550–1583 (PSQA…KGKT). Ser1099 is subject to Phosphoserine. The segment covering 1140–1151 (VHQEELGKEEPK) has biased composition (basic and acidic residues). Over residues 1399–1409 (SSPKAKSTPSK) the composition is skewed to low complexity. At Ser1400 the chain carries Phosphoserine. Polar residues predominate over residues 1442–1459 (TRSGLAESNSKSKPTQIG). 2 stretches are compositionally biased toward basic and acidic residues: residues 1484–1503 (TKQS…DDSN) and 1518–1527 (TTDRSSKSKE). A phosphoserine mark is found at Ser1635 and Ser1661. Disordered regions lie at residues 1763–1898 (EVGD…SDVP) and 1930–1960 (KSTR…RSSR). Over residues 1772–1790 (NDSKVELARGKIEHHTDKK) the composition is skewed to basic and acidic residues. Lys1804 participates in a covalent cross-link: Glycyl lysine isopeptide (Lys-Gly) (interchain with G-Cter in SUMO2). The span at 1806–1818 (DSFSQVGPGSETV) shows a compositional bias: polar residues. The segment covering 1819–1831 (TQKDLKTMPERHL) has biased composition (basic and acidic residues). A Phosphoserine modification is found at Ser1864. Over residues 1870-1885 (AELKDSEPDEKRRKTQ) the composition is skewed to basic and acidic residues. The Matrin-type zinc finger occupies 1876 to 1906 (EPDEKRRKTQDSSVGKSMTSDVPGDLDFLVP). The segment covering 1886–1895 (DSSVGKSMTS) has biased composition (polar residues). The segment covering 1936–1960 (QNTEKFMAKQRKEKEQNETEERSSR) has biased composition (basic and acidic residues).

As to quaternary structure, interacts with FHL2. Interacts with CEBPA, CEBPD and CEBPG. Interacts with MPHOSPH8 and TASOR components of the HUSH complex; leading to recruitment of the HUSH complex. Interacts with SETDB1. Interacts with HDAC1. Interacts with HDAC4.

Its subcellular location is the nucleus speckle. Its function is as follows. Transcription factor that binds to cytidine clusters in double-stranded DNA. Plays a key role in the silencing of unintegrated retroviral DNA: some part of the retroviral DNA formed immediately after infection remains unintegrated in the host genome and is transcriptionally repressed. Mediates transcriptional repression of unintegrated viral DNA by specifically binding to the cytidine clusters of retroviral DNA and mediating the recruitment of chromatin silencers, such as the HUSH complex, SETDB1 and the histone deacetylases HDAC1 and HDAC4. Acts as an early regulator of adipogenesis by acting as a transcription cofactor of CEBPs (CEBPA, CEBPD and/or CEBPG), controlling the expression of PPARG and probably of other proadipogenic genes, such as SREBF1. May also regulate alternative splicing of target genes during adipogenesis. This is Zinc finger protein 638 from Mus musculus (Mouse).